We begin with the raw amino-acid sequence, 611 residues long: Protein ral2 (611 aa).

Kelch repeat units lie at residues 43 to 91 (EAFV…HSGD), 96 to 149 (KLIF…EVNG), and 175 to 224 (YLII…VINK). A Phosphoserine modification is found at serine 604.

Functionally, essential for mating and for recognition of the mating pheromone, and for the determination of cell shape. Implicated in activation of the ras1 protein. The polypeptide is Protein ral2 (ral2) (Schizosaccharomyces pombe (strain 972 / ATCC 24843) (Fission yeast)).